Reading from the N-terminus, the 174-residue chain is Co-chaperone protein HscB (174 aa).

In terms of domain architecture, J spans 2-74 (DYFTLFGLPA…LKRAEYMLSL (73 aa)).

The protein belongs to the HscB family. In terms of assembly, interacts with HscA and stimulates its ATPase activity. Interacts with IscU.

Co-chaperone involved in the maturation of iron-sulfur cluster-containing proteins. Seems to help targeting proteins to be folded toward HscA. The protein is Co-chaperone protein HscB of Yersinia pestis bv. Antiqua (strain Antiqua).